The sequence spans 466 residues: 3-isopropylmalate dehydratase large subunit (466 aa).

C347, C407, and C410 together coordinate [4Fe-4S] cluster.

It belongs to the aconitase/IPM isomerase family. LeuC type 1 subfamily. In terms of assembly, heterodimer of LeuC and LeuD. Requires [4Fe-4S] cluster as cofactor.

The catalysed reaction is (2R,3S)-3-isopropylmalate = (2S)-2-isopropylmalate. The protein operates within amino-acid biosynthesis; L-leucine biosynthesis; L-leucine from 3-methyl-2-oxobutanoate: step 2/4. In terms of biological role, catalyzes the isomerization between 2-isopropylmalate and 3-isopropylmalate, via the formation of 2-isopropylmaleate. This Shewanella woodyi (strain ATCC 51908 / MS32) protein is 3-isopropylmalate dehydratase large subunit.